Here is a 254-residue protein sequence, read N- to C-terminus: Triosephosphate isomerase (254 aa).

Residue 9–11 (NWK) coordinates substrate. Residue histidine 95 is the Electrophile of the active site. The active-site Proton acceptor is the glutamate 167. Substrate is bound by residues glycine 173, serine 213, and 234 to 235 (GG).

This sequence belongs to the triosephosphate isomerase family. Homodimer.

Its subcellular location is the cytoplasm. It catalyses the reaction D-glyceraldehyde 3-phosphate = dihydroxyacetone phosphate. Its pathway is carbohydrate biosynthesis; gluconeogenesis. It participates in carbohydrate degradation; glycolysis; D-glyceraldehyde 3-phosphate from glycerone phosphate: step 1/1. Its function is as follows. Involved in the gluconeogenesis. Catalyzes stereospecifically the conversion of dihydroxyacetone phosphate (DHAP) to D-glyceraldehyde-3-phosphate (G3P). The sequence is that of Triosephosphate isomerase from Roseiflexus sp. (strain RS-1).